Reading from the N-terminus, the 477-residue chain is Aspartyl/glutamyl-tRNA(Asn/Gln) amidotransferase subunit B (477 aa).

Belongs to the GatB/GatE family. GatB subfamily. Heterotrimer of A, B and C subunits.

The enzyme catalyses L-glutamyl-tRNA(Gln) + L-glutamine + ATP + H2O = L-glutaminyl-tRNA(Gln) + L-glutamate + ADP + phosphate + H(+). The catalysed reaction is L-aspartyl-tRNA(Asn) + L-glutamine + ATP + H2O = L-asparaginyl-tRNA(Asn) + L-glutamate + ADP + phosphate + 2 H(+). Allows the formation of correctly charged Asn-tRNA(Asn) or Gln-tRNA(Gln) through the transamidation of misacylated Asp-tRNA(Asn) or Glu-tRNA(Gln) in organisms which lack either or both of asparaginyl-tRNA or glutaminyl-tRNA synthetases. The reaction takes place in the presence of glutamine and ATP through an activated phospho-Asp-tRNA(Asn) or phospho-Glu-tRNA(Gln). This Coxiella burnetii (strain CbuG_Q212) (Coxiella burnetii (strain Q212)) protein is Aspartyl/glutamyl-tRNA(Asn/Gln) amidotransferase subunit B.